A 920-amino-acid polypeptide reads, in one-letter code: Isoleucine--tRNA ligase (920 aa).

The short motif at 58-68 (PYANGHLHLGH) is the 'HIGH' region element. Glutamate 569 provides a ligand contact to L-isoleucyl-5'-AMP. A 'KMSKS' region motif is present at residues 610–614 (KMSKS). Lysine 613 contributes to the ATP binding site. Zn(2+)-binding residues include cysteine 895, cysteine 898, cysteine 910, and cysteine 913.

Belongs to the class-I aminoacyl-tRNA synthetase family. IleS type 1 subfamily. Monomer. It depends on Zn(2+) as a cofactor.

It localises to the cytoplasm. It catalyses the reaction tRNA(Ile) + L-isoleucine + ATP = L-isoleucyl-tRNA(Ile) + AMP + diphosphate. In terms of biological role, catalyzes the attachment of isoleucine to tRNA(Ile). As IleRS can inadvertently accommodate and process structurally similar amino acids such as valine, to avoid such errors it has two additional distinct tRNA(Ile)-dependent editing activities. One activity is designated as 'pretransfer' editing and involves the hydrolysis of activated Val-AMP. The other activity is designated 'posttransfer' editing and involves deacylation of mischarged Val-tRNA(Ile). The sequence is that of Isoleucine--tRNA ligase from Helicobacter pylori (strain HPAG1).